The following is a 292-amino-acid chain: NAD kinase (292 aa).

The active-site Proton acceptor is the Asp-73. Residues 73–74 (DG), 147–148 (NE), His-158, Arg-175, Asp-177, 188–193 (TAYSLS), and Gln-247 each bind NAD(+).

This sequence belongs to the NAD kinase family. It depends on a divalent metal cation as a cofactor.

The protein resides in the cytoplasm. It catalyses the reaction NAD(+) + ATP = ADP + NADP(+) + H(+). In terms of biological role, involved in the regulation of the intracellular balance of NAD and NADP, and is a key enzyme in the biosynthesis of NADP. Catalyzes specifically the phosphorylation on 2'-hydroxyl of the adenosine moiety of NAD to yield NADP. The chain is NAD kinase from Shigella boydii serotype 4 (strain Sb227).